The primary structure comprises 37 residues: Large ribosomal subunit protein bL36c (37 aa).

This sequence belongs to the bacterial ribosomal protein bL36 family.

Its subcellular location is the plastid. The protein resides in the chloroplast. The polypeptide is Large ribosomal subunit protein bL36c (Ostreococcus tauri).